Reading from the N-terminus, the 956-residue chain is DNA ligase 4 (956 aa).

E307, K309, I310, R314, E371, F409, E476, K481, K498, and K500 together coordinate ATP. The active-site N6-AMP-lysine intermediate is K309. E371 provides a ligand contact to Mg(2+). E476 lines the Mg(2+) pocket. The disordered stretch occupies residues 666 to 700 (LEDRKRRNAGPGRGAKRLKLANVSSDEDELGTDER). BRCT domains lie at 700–793 (RPTS…PRNL) and 857–956 (PKGM…DYPL).

The protein belongs to the ATP-dependent DNA ligase family. It depends on Mg(2+) as a cofactor.

Its subcellular location is the nucleus. It carries out the reaction ATP + (deoxyribonucleotide)n-3'-hydroxyl + 5'-phospho-(deoxyribonucleotide)m = (deoxyribonucleotide)n+m + AMP + diphosphate.. Functionally, DNA ligase involved in DNA non-homologous end joining (NHEJ); required for double-strand break (DSB) repair. This is DNA ligase 4 (LIG4) from Yarrowia lipolytica (strain CLIB 122 / E 150) (Yeast).